Reading from the N-terminus, the 682-residue chain is Potassium-transporting ATPase ATP-binding subunit (682 aa).

4 helical membrane-spanning segments follow: residues 34-54 (PVMF…IAMA), 62-82 (ALFS…ANFA), 219-239 (IALT…TATL), and 254-274 (VLVA…LSAI). Asp-307 functions as the 4-aspartylphosphate intermediate in the catalytic mechanism. ATP contacts are provided by residues Asp-344, Glu-348, 377-384 (FTAQSRMS), and Lys-395. Mg(2+) contacts are provided by Asp-518 and Asp-522. Transmembrane regions (helical) follow at residues 588-608 (FAII…LNIM), 616-636 (AILS…PLAL), and 656-676 (IYGL…DLLL).

This sequence belongs to the cation transport ATPase (P-type) (TC 3.A.3) family. Type IA subfamily. As to quaternary structure, the system is composed of three essential subunits: KdpA, KdpB and KdpC.

The protein localises to the cell inner membrane. It catalyses the reaction K(+)(out) + ATP + H2O = K(+)(in) + ADP + phosphate + H(+). Part of the high-affinity ATP-driven potassium transport (or Kdp) system, which catalyzes the hydrolysis of ATP coupled with the electrogenic transport of potassium into the cytoplasm. This subunit is responsible for energy coupling to the transport system and for the release of the potassium ions to the cytoplasm. The protein is Potassium-transporting ATPase ATP-binding subunit of Escherichia coli O157:H7 (strain EC4115 / EHEC).